The chain runs to 845 residues: BLOC-2 complex member HPS5 homolog (845 aa).

Residues 239-268 are disordered; sequence PTEEDLEDAKSMEGSDDNDNDQRSSPSGVK.

Belongs to the HPS5 family.

In terms of biological role, has a role in the biogenesis of eye pigment granules. Eye pigment granules are specialized forms of late endosomes or lysosomes. Biogenesis of pigment granules in the eye requires molecular components required for protein delivery to lysosomes. This chain is BLOC-2 complex member HPS5 homolog, found in Aedes aegypti (Yellowfever mosquito).